We begin with the raw amino-acid sequence, 98 residues long: MSKQENNEDMITLIDENGNEQLFKELFTFDSDDYGKSYIFIYPAEQENDDSVDIQAYIIADNEDNDGQDLVPIEDDKEWDMVEEVLNTFLDNDGNFKA.

It belongs to the UPF0473 family.

This chain is UPF0473 protein LAR_0522, found in Limosilactobacillus reuteri subsp. reuteri (strain JCM 1112) (Lactobacillus reuteri).